We begin with the raw amino-acid sequence, 337 residues long: Pyridoxal 5'-phosphate synthase subunit PdxS (337 aa).

Aspartate 63 is a binding site for D-ribose 5-phosphate. Residue lysine 120 is the Schiff-base intermediate with D-ribose 5-phosphate of the active site. Residue glycine 192 coordinates D-ribose 5-phosphate. Lysine 204 is a D-glyceraldehyde 3-phosphate binding site. D-ribose 5-phosphate contacts are provided by residues glycine 253 and 274–275; that span reads GS.

It belongs to the PdxS/SNZ family. In the presence of PdxT, forms a dodecamer of heterodimers.

The enzyme catalyses aldehydo-D-ribose 5-phosphate + D-glyceraldehyde 3-phosphate + L-glutamine = pyridoxal 5'-phosphate + L-glutamate + phosphate + 3 H2O + H(+). Its pathway is cofactor biosynthesis; pyridoxal 5'-phosphate biosynthesis. Functionally, catalyzes the formation of pyridoxal 5'-phosphate from ribose 5-phosphate (RBP), glyceraldehyde 3-phosphate (G3P) and ammonia. The ammonia is provided by the PdxT subunit. Can also use ribulose 5-phosphate and dihydroxyacetone phosphate as substrates, resulting from enzyme-catalyzed isomerization of RBP and G3P, respectively. The chain is Pyridoxal 5'-phosphate synthase subunit PdxS from Aeropyrum pernix (strain ATCC 700893 / DSM 11879 / JCM 9820 / NBRC 100138 / K1).